The chain runs to 246 residues: 4-hydroxy-tetrahydrodipicolinate reductase (246 aa).

NAD(+) is bound by residues 8–13 (GISGRM), 75–77 (GTT), and 99–102 (ASNY). The active-site Proton donor/acceptor is the H132. H133 contributes to the (S)-2,3,4,5-tetrahydrodipicolinate binding site. K136 functions as the Proton donor in the catalytic mechanism. A (S)-2,3,4,5-tetrahydrodipicolinate-binding site is contributed by 142–143 (GT).

This sequence belongs to the DapB family.

The protein localises to the cytoplasm. The catalysed reaction is (S)-2,3,4,5-tetrahydrodipicolinate + NAD(+) + H2O = (2S,4S)-4-hydroxy-2,3,4,5-tetrahydrodipicolinate + NADH + H(+). The enzyme catalyses (S)-2,3,4,5-tetrahydrodipicolinate + NADP(+) + H2O = (2S,4S)-4-hydroxy-2,3,4,5-tetrahydrodipicolinate + NADPH + H(+). It participates in amino-acid biosynthesis; L-lysine biosynthesis via DAP pathway; (S)-tetrahydrodipicolinate from L-aspartate: step 4/4. In terms of biological role, catalyzes the conversion of 4-hydroxy-tetrahydrodipicolinate (HTPA) to tetrahydrodipicolinate. This is 4-hydroxy-tetrahydrodipicolinate reductase from Akkermansia muciniphila (strain ATCC BAA-835 / DSM 22959 / JCM 33894 / BCRC 81048 / CCUG 64013 / CIP 107961 / Muc).